Consider the following 351-residue polypeptide: Renin receptor (351 aa).

The signal sequence occupies residues 1 to 17 (MAVLVVFLSFLVADVFG). Residues 18–303 (NEFSILRSPG…YNLAYKYNFE (286 aa)) lie on the Extracellular side of the membrane. Residues 304-324 (YPVVFNLVLWIMIGLALTLIV) form a helical membrane-spanning segment. At 325-351 (TCYNIWNMDPGYDSIIYRMTNQKIRMD) the chain is on the cytoplasmic side. Residues 347-351 (KIRMD) carry the Mediates retrograde transport to the ER motif.

As to quaternary structure, interacts with renin. Accessory component of the multisubunit proton-transporting vacuolar (V)-ATPase protein pump. Interacts (via N-terminus) with ATP6AP1 (via N-terminus). Interacts with ATP6V0D1; ATP6V0D1 is a V-ATPase complex subunit and the interaction promotes V-ATPase complex assembly. Interacts with TMEM9; TMEM9 is a V-ATPase assembly regulator and the interaction induces the interaction with ATP6V0D1. Interacts with VMA21 (via N-terminus); VMA21 is a V-ATPase accessory component. Post-translationally, phosphorylated. Proteolytically cleaved by a furin-like convertase in the trans-Golgi network to generate N- and C-terminal fragments. As to expression, expressed in the brain.

The protein resides in the endoplasmic reticulum membrane. It localises to the lysosome membrane. It is found in the cytoplasmic vesicle. Its subcellular location is the autophagosome membrane. The protein localises to the cell projection. The protein resides in the dendritic spine membrane. It localises to the axon. It is found in the endosome membrane. Its subcellular location is the clathrin-coated vesicle membrane. The protein localises to the secretory vesicle. The protein resides in the synaptic vesicle membrane. Multifunctional protein which functions as a renin, prorenin cellular receptor and is involved in the assembly of the lysosomal proton-transporting V-type ATPase (V-ATPase) and the acidification of the endo-lysosomal system. May mediate renin-dependent cellular responses by activating ERK1 and ERK2. By increasing the catalytic efficiency of renin in AGT/angiotensinogen conversion to angiotensin I, may also play a role in the renin-angiotensin system (RAS). Through its function in V-type ATPase (v-ATPase) assembly and acidification of the lysosome it regulates protein degradation and may control different signaling pathways important for proper brain development, synapse morphology and synaptic transmission. The sequence is that of Renin receptor (ATP6AP2) from Bos taurus (Bovine).